The chain runs to 796 residues: Fibroblast growth factor receptor 3 (796 aa).

The signal sequence occupies residues 1–19 (MLVWLCGLCLVTLAGGRSA). The Extracellular segment spans residues 20-358 (ARLPLTEGRP…AEPVPDVDTS (339 aa)). The Ig-like C2-type 1 domain occupies 21-119 (RLPLTEGRPT…VLRNVTVRVT (99 aa)). An intrachain disulfide couples C56 to C102. Residues N91 and N113 are each glycosylated (N-linked (GlcNAc...) asparagine). The disordered stretch occupies residues 117–142 (RVTDSPSSGDDEDDDEESESANAPKF). Residues 125-135 (GDDEDDDEESE) show a composition bias toward acidic residues. Ig-like C2-type domains follow at residues 140–233 (PKFT…YTLD) and 239–344 (PHRP…AWLT). A disulfide bridge connects residues C165 and C217. Residues N214, N251, N283, N304, and N317 are each glycosylated (N-linked (GlcNAc...) asparagine). C264 and C328 are disulfide-bonded. A helical transmembrane segment spans residues 359–379 (VSILAAAGCVAVVILVVIIIF). Residues 380-796 (TYKMKMPSKK…HQQYNGVIRT (417 aa)) lie on the Cytoplasmic side of the membrane. The 290-residue stretch at 457–746 (LTLGKPLGEG…LTVTSTDEYL (290 aa)) folds into the Protein kinase domain. ATP contacts are provided by residues 463–471 (LGEGCFGQV) and K493. D602 acts as the Proton acceptor in catalysis. Residues Y632, Y633, Y709, and Y745 each carry the phosphotyrosine; by autocatalysis modification.

Belongs to the protein kinase superfamily. Tyr protein kinase family. Fibroblast growth factor receptor subfamily. In terms of assembly, monomer. Homodimer after ligand binding. In terms of processing, autophosphorylated. Binding of FGF family members together with heparan sulfate proteoglycan or heparin promotes receptor dimerization and autophosphorylation on tyrosine residues. Autophosphorylation occurs in trans between the two FGFR molecules present in the dimer. As to expression, undetectable in the adult skeletal muscle. Low levels of expression were detected in the liver, lung and kidney. Medium levels of expression were detected in the heart, spleen, intestine and eye. Highest expression is observed in the testis.

It is found in the cell membrane. It carries out the reaction L-tyrosyl-[protein] + ATP = O-phospho-L-tyrosyl-[protein] + ADP + H(+). With respect to regulation, present in an inactive conformation in the absence of bound ligand. Ligand binding leads to dimerization and activation by autophosphorylation on tyrosine residues. Functionally, tyrosine-protein kinase that acts as a cell-surface receptor for fibroblast growth factors and plays an essential role in the regulation of cell proliferation, differentiation and apoptosis. Plays an essential role in the regulation of chondrocyte differentiation, proliferation and apoptosis, and is required for normal skeleton development. Regulates both osteogenesis and postnatal bone mineralization by osteoblasts. Promotes apoptosis in chondrocytes, but can also promote cancer cell proliferation. Phosphorylates PLCG1, CBL and FRS2. Ligand binding leads to the activation of several signaling cascades. Activation of PLCG1 leads to the production of the cellular signaling molecules diacylglycerol and inositol 1,4,5-trisphosphate. Phosphorylation of FRS2 triggers recruitment of GRB2, GAB1, PIK3R1 and SOS1, and mediates activation of RAS, MAPK1/ERK2, MAPK3/ERK1 and the MAP kinase signaling pathway, as well as of the AKT1 signaling pathway. This chain is Fibroblast growth factor receptor 3 (FGFR3), found in Pleurodeles waltl (Iberian ribbed newt).